Reading from the N-terminus, the 332-residue chain is Glyceraldehyde-3-phosphate dehydrogenase 3 (332 aa).

NAD(+) is bound by residues arginine 11, isoleucine 12, and aspartate 33. Residues lysine 46 and lysine 63 each participate in a glycyl lysine isopeptide (Lys-Gly) (interchain with G-Cter in ubiquitin) cross-link. Threonine 120 contributes to the NAD(+) binding site. Residue 149-151 participates in D-glyceraldehyde 3-phosphate binding; sequence SCT. Cysteine 150 acts as the Nucleophile in catalysis. Cysteine persulfide occurs at positions 150 and 154. Residue lysine 160 forms a Glycyl lysine isopeptide (Lys-Gly) (interchain with G-Cter in URM1) linkage. Residues threonine 180, 209–210, and arginine 232 each bind D-glyceraldehyde 3-phosphate; that span reads TG. Serine 302 carries the phosphoserine modification. Lysine 307 participates in a covalent cross-link: Glycyl lysine isopeptide (Lys-Gly) (interchain with G-Cter in URM1). Residues asparagine 314 and tyrosine 318 each contribute to the NAD(+) site.

It belongs to the glyceraldehyde-3-phosphate dehydrogenase family. Homotetramer. Conjugated to URM1, a ubiquitin-like protein, in response to oxidative stresses. The attachment of URM1 to lysine residues exclusively depends on the presence of a peroxidatic cysteine in the target protein, with low specificity for the particular residue, motif, or structural context at which urmylation can occur. The URM1-conjugation reaction is mechanistically and directly coupled to the process of cysteine persulfidation, transfering the sulfur atom of the URM1 thiocarboxyl group to redox-active cysteine residues in the target protein if it is exposed to oxidative conditions. In terms of processing, persulfidated on specific redox-active cysteine residues. Persulfidation (also called protein S-sulfhydration) may provide a molecular mechanism that enables cells to protect vulnerable cysteine residues from reactive oxygen species (ROS) under stress conditions.

It is found in the cytoplasm. The protein localises to the mitochondrion. The enzyme catalyses D-glyceraldehyde 3-phosphate + phosphate + NAD(+) = (2R)-3-phospho-glyceroyl phosphate + NADH + H(+). It carries out the reaction NADH + H2O = (6R)-NADHX. It catalyses the reaction NADH + H2O = (6S)-NADHX. The catalysed reaction is NADPH + H2O = (6R)-NADPHX. The enzyme catalyses NADPH + H2O = (6S)-NADPHX. Its pathway is carbohydrate degradation; glycolysis; pyruvate from D-glyceraldehyde 3-phosphate: step 1/5. Functionally, glyceraldehyde-3-phosphate dehydrogenase (GAPDH) involved in glycolysis and gluconeogenesis. Catalyzes the reaction of glyceraldehyde-3-phosphate to 1,3 bis-phosphoglycerate. The contribution of the TDH1, TDH2, and TDH3 to the total glyceraldehyde-3-phosphate dehydrogenase activity is 10-15, 25-30, and 50-60%, respectively. Its function is as follows. As a side activity, catalyzes the hydration of the nicotinamide ring of NADH or NADPH at the C6 position to give the corresponding hydrates, NADHX and NADPHX, which exist as R and S epimers, that cannot act as electron donors or acceptors and inhibit several dehydrogenases, making them toxic. This chain is Glyceraldehyde-3-phosphate dehydrogenase 3, found in Saccharomyces cerevisiae (strain ATCC 204508 / S288c) (Baker's yeast).